The sequence spans 260 residues: uncharacterized protein (260 aa).

Belongs to the methyltransferase superfamily.

Its subcellular location is the cytoplasm. It is found in the nucleus. Probable methyltransferase. This is an uncharacterized protein from Schizosaccharomyces pombe (strain 972 / ATCC 24843) (Fission yeast).